Reading from the N-terminus, the 365-residue chain is Histidinol-phosphate aminotransferase (365 aa).

Residue K220 is modified to N6-(pyridoxal phosphate)lysine.

Belongs to the class-II pyridoxal-phosphate-dependent aminotransferase family. Histidinol-phosphate aminotransferase subfamily. As to quaternary structure, homodimer. Pyridoxal 5'-phosphate is required as a cofactor.

The enzyme catalyses L-histidinol phosphate + 2-oxoglutarate = 3-(imidazol-4-yl)-2-oxopropyl phosphate + L-glutamate. The protein operates within amino-acid biosynthesis; L-histidine biosynthesis; L-histidine from 5-phospho-alpha-D-ribose 1-diphosphate: step 7/9. This is Histidinol-phosphate aminotransferase from Xylella fastidiosa (strain 9a5c).